We begin with the raw amino-acid sequence, 70 residues long: DNA gyrase inhibitor YacG (70 aa).

Residues cysteine 7, cysteine 10, cysteine 26, and cysteine 30 each contribute to the Zn(2+) site.

This sequence belongs to the DNA gyrase inhibitor YacG family. As to quaternary structure, interacts with GyrB. It depends on Zn(2+) as a cofactor.

Inhibits all the catalytic activities of DNA gyrase by preventing its interaction with DNA. Acts by binding directly to the C-terminal domain of GyrB, which probably disrupts DNA binding by the gyrase. The sequence is that of DNA gyrase inhibitor YacG from Shewanella woodyi (strain ATCC 51908 / MS32).